The following is a 285-amino-acid chain: Involucrin (285 aa).

Disordered regions lie at residues 1 to 93 (MSQQ…QEQK), 120 to 256 (LEQQ…AQVQ), and 266 to 285 (LPLI…PEHQ). Over residues 27 to 39 (IDTQQEQVKQPTS) the composition is skewed to polar residues. Composition is skewed to low complexity over residues 72-87 (EQQC…QKQQ), 120-129 (LEQQQEQQES), and 137-147 (EQCLEQQQEQQ). Basic and acidic residues-rich tracts occupy residues 149–165 (SQEK…KEEL), 175–185 (EQCEKHQEAKN), and 200–233 (QQKE…KEEQ). Low complexity predominate over residues 235 to 248 (LEQQGQQEGQLEQP). Basic and acidic residues predominate over residues 272-285 (QHQKQEVHDPPEHQ).

It belongs to the involucrin family. In terms of assembly, directly or indirectly cross-linked to cornifelin (CNFN). Substrate of transglutaminase. Specific glutamines or lysines are cross-linked to keratins, desmoplakin and to inter involucrin molecules. As to expression, keratinocytes of epidermis and other stratified squamous epithelia.

The protein resides in the cytoplasm. Part of the insoluble cornified cell envelope (CE) of stratified squamous epithelia. The chain is Involucrin (IVL) from Canis lupus familiaris (Dog).